The chain runs to 322 residues: Acetylglutamate kinase (322 aa).

Residues 89-90 (GG), Arg111, and Asn217 each bind substrate.

Belongs to the acetylglutamate kinase family. ArgB subfamily.

The protein resides in the cytoplasm. It carries out the reaction N-acetyl-L-glutamate + ATP = N-acetyl-L-glutamyl 5-phosphate + ADP. The protein operates within amino-acid biosynthesis; L-arginine biosynthesis; N(2)-acetyl-L-ornithine from L-glutamate: step 2/4. In terms of biological role, catalyzes the ATP-dependent phosphorylation of N-acetyl-L-glutamate. The sequence is that of Acetylglutamate kinase from Ehrlichia ruminantium (strain Gardel).